A 189-amino-acid polypeptide reads, in one-letter code: Peptidyl-tRNA hydrolase (189 aa).

Tyr-15 is a tRNA binding site. Catalysis depends on His-20, which acts as the Proton acceptor. The tRNA site is built by Phe-66, Asn-68, and Asn-114.

Belongs to the PTH family. Monomer.

It localises to the cytoplasm. It carries out the reaction an N-acyl-L-alpha-aminoacyl-tRNA + H2O = an N-acyl-L-amino acid + a tRNA + H(+). In terms of biological role, hydrolyzes ribosome-free peptidyl-tRNAs (with 1 or more amino acids incorporated), which drop off the ribosome during protein synthesis, or as a result of ribosome stalling. Catalyzes the release of premature peptidyl moieties from peptidyl-tRNA molecules trapped in stalled 50S ribosomal subunits, and thus maintains levels of free tRNAs and 50S ribosomes. The polypeptide is Peptidyl-tRNA hydrolase (Dichelobacter nodosus (strain VCS1703A)).